A 345-amino-acid chain; its full sequence is L-threonine 3-dehydrogenase (345 aa).

C42 contacts Zn(2+). Residues T44 and H47 each act as charge relay system in the active site. Zn(2+) is bound by residues H67, E68, C97, C100, C103, and C111. NAD(+) is bound by residues I179, D199, R204, 266-268 (LGI), and 290-291 (IY).

It belongs to the zinc-containing alcohol dehydrogenase family. Homotetramer. Requires Zn(2+) as cofactor.

Its subcellular location is the cytoplasm. The enzyme catalyses L-threonine + NAD(+) = (2S)-2-amino-3-oxobutanoate + NADH + H(+). It functions in the pathway amino-acid degradation; L-threonine degradation via oxydo-reductase pathway; glycine from L-threonine: step 1/2. Catalyzes the NAD(+)-dependent oxidation of L-threonine to 2-amino-3-ketobutyrate. The sequence is that of L-threonine 3-dehydrogenase from Rhizobium rhizogenes (strain K84 / ATCC BAA-868) (Agrobacterium radiobacter).